A 337-amino-acid polypeptide reads, in one-letter code: Protein RETICULATA-RELATED 3, chloroplastic (337 aa).

Residues 1–59 constitute a chloroplast transit peptide; sequence MAAMAAKLQLSAKSDQSSVRLPRVINLSRDPTTRVSFPRNGSVCSLHTNFSSPHLAKPC. Residues 70-89 are compositionally biased toward gly residues; sequence NNGGGSGSGGGGGGFGGSGG. Positions 70–96 are disordered; that stretch reads NNGGGSGSGGGGGGFGGSGGEASEESS. Transmembrane regions (helical) follow at residues 151–171 and 216–236; these read FVFS…YMLA and VFAS…NGLI.

Belongs to the RETICULATA family. Expressed in root meristem, root vasculature, distal region of young leaf primordia, leaf bundle sheath cells, hydathodes and pollen grains.

It localises to the plastid. It is found in the chloroplast membrane. Its function is as follows. May play a role in leaf development. Required for leaf mesophyll cell division in the early stages of leaf organogenesis. This is Protein RETICULATA-RELATED 3, chloroplastic from Arabidopsis thaliana (Mouse-ear cress).